The primary structure comprises 555 residues: Neurofilament light polypeptide (555 aa).

S2 is modified (N-acetylserine). The interval 2–93 is head; sequence SSFSYEPYYS…KSIRTQEKAQ (92 aa). Position 23 is an asymmetric dimethylarginine; alternate (R23). R23 is subject to Omega-N-methylarginine; alternate. R30 bears the Omega-N-methylarginine mark. Y43 bears the Phosphotyrosine mark. Residues S56, S67, and S103 each carry the phosphoserine modification. Positions 90–401 constitute an IF rod domain; that stretch reads EKAQLQDLND…KLLEGEETRL (312 aa). The tract at residues 94–125 is coil 1A; sequence LQDLNDRFASFIERVHELEQQNKVLEAELLVL. The tract at residues 126 to 138 is linker 1; it reads RQKHSEPSRFRAL. Residues 139 to 234 are coil 1B; sequence YEQEIRDLRL…KVHEEEIAEL (96 aa). Residues 235-253 form a linker 12 region; it reads QAQIQYAQISVEMDVSSKP. The interval 254–272 is coil 2A; the sequence is DLSAALKDIRAQYEKLAAK. The interval 273–281 is linker 2; sequence NMQNAEEWF. The tract at residues 282 to 397 is coil 2B; that stretch reads KSRFTVLTES…AAYRKLLEGE (116 aa). A tail, subdomain A region spans residues 398-444; the sequence is ETRLSFTSVGSLTTGYTQSSQVFGRSAYGGLQTSSYLMSARSFPSYY. Residues 398-555 form a tail region; that stretch reads ETRLSFTSVG…GEEQATKKKD (158 aa). A tail, subdomain B (acidic) region spans residues 445 to 555; the sequence is TSHVQEEQIE…GEEQATKKKD (111 aa). A disordered region spans residues 463–555; that stretch reads KAEEAKDEPP…GEEQATKKKD (93 aa). Residues 472–540 are compositionally biased toward acidic residues; the sequence is PSEGEAEEEE…ETKEAEEEEK (69 aa). Phosphoserine is present on S473. A Phosphothreonine modification is found at T532. Residues 541–555 show a composition bias toward basic and acidic residues; sequence KDEGAGEEQATKKKD.

The protein belongs to the intermediate filament family. As to quaternary structure, forms homodimers (in vitro). Forms heterodimers with NEFH or NEFM; which can further hetero-oligomerize (in vitro). Forms heterodimers with INA (in vitro). Interacts with ARHGEF28. Interacts with TRIM2. O-glycosylated. Post-translationally, phosphorylated in the head and rod regions by the PKC kinase PKN1, leading to the inhibition of polymerization. In terms of processing, ubiquitinated in the presence of TRIM2 and UBE2D1.

The protein resides in the cell projection. It localises to the axon. It is found in the cytoplasm. The protein localises to the cytoskeleton. In terms of biological role, neurofilaments usually contain three intermediate filament proteins: NEFL, NEFM, and NEFH which are involved in the maintenance of neuronal caliber. May additionally cooperate with the neuronal intermediate filament proteins PRPH and INA to form neuronal filamentous networks. This is Neurofilament light polypeptide (NEFL) from Bos taurus (Bovine).